A 411-amino-acid chain; its full sequence is Signal-transducing adaptor protein 2 (411 aa).

Residues 20–120 (HYYESFLEKK…GFILTVVELR (101 aa)) form the PH domain. Tyrosine 22 bears the Phosphotyrosine mark. Residues 152–248 (WCFLQVSRLE…RALVPFLLDE (97 aa)) enclose the SH2 domain. Tyrosine 250 bears the Phosphotyrosine; by PTK6 mark. A disordered region spans residues 291–320 (VPVSVSSQEDKLPQLPPLPQLPDTDENYVT). Tyrosine 318 and tyrosine 330 each carry phosphotyrosine. Residues 338 to 364 (SSQAVPLKPKKPARLPAKPPKPSVVPK) form a disordered region. Residues 390–410 (TRLGDITAELEEKLQKRRALE) are a coiled coil.

As to quaternary structure, interacts with PTK6 and CSF1R. Post-translationally, phosphorylated on tyrosine. Phosphorylated by PTK6 at Tyr-250 modulates PTK6-mediated STAT3 activation. Widely expressed.

The protein localises to the cytoplasm. It localises to the membrane. Functionally, substrate of protein kinase PTK6. May play a regulatory role in the acute-phase response in systemic inflammation and may modulate STAT3 activity. This is Signal-transducing adaptor protein 2 (Stap2) from Mus musculus (Mouse).